Reading from the N-terminus, the 173-residue chain is Signal peptidase complex catalytic subunit SEC11 (173 aa).

Residues 1–15 (MLGVSGMQPRQLAAQ) are Cytoplasmic-facing. The helical; Signal-anchor for type II membrane protein transmembrane segment at 16–36 (ILNFALVLSTAFMMWKGLSVV) threads the bilayer. Over 37 to 173 (SDSSSPIVVV…MGVMVVLQRE (137 aa)) the chain is Lumenal. Catalysis depends on charge relay system residues serine 50, histidine 89, and aspartate 115. The tract at residues 159-170 (VMLGLMGVMVVL) is C-terminal short (CTS) helix.

The protein belongs to the peptidase S26B family. Component of the signal peptidase complex (SPC) composed of a catalytic subunit SEC11 and three accessory subunits SPC1, SPC2 and SPC3. The complex induces a local thinning of the ER membrane which is used to measure the length of the signal peptide (SP) h-region of protein substrates. This ensures the selectivity of the complex towards h-regions shorter than 18-20 amino acids. SPC associates with the translocon complex.

The protein resides in the endoplasmic reticulum membrane. The catalysed reaction is Cleavage of hydrophobic, N-terminal signal or leader sequences from secreted and periplasmic proteins.. Functionally, catalytic component of the signal peptidase complex (SPC) which catalyzes the cleavage of N-terminal signal sequences from nascent proteins as they are translocated into the lumen of the endoplasmic reticulum. Specifically cleaves N-terminal signal peptides that contain a hydrophobic alpha-helix (h-region) shorter than 18-20 amino acids. The protein is Signal peptidase complex catalytic subunit SEC11 (SEC11) of Leptosphaeria maculans (strain JN3 / isolate v23.1.3 / race Av1-4-5-6-7-8) (Blackleg fungus).